The sequence spans 571 residues: Chitin-inducible gibberellin-responsive protein 1 (571 aa).

Residues 61 to 77 show a composition bias toward polar residues; it reads TNTPDNQSSTETISAQP. Disordered stretches follow at residues 61–80 and 151–180; these read TNTPDNQSSTETISAQPISP and QRSRTWSHESRQPLPGVGRSQFASGGYPTA. A GRAS domain is found at 192-571; that stretch reads ELREDPQIIV…RKLISASAWH (380 aa). The interval 199–259 is leucine repeat I (LRI); that stretch reads IIVKQLLTRC…VARHGNSGTN (61 aa). The tract at residues 278–343 is VHIID; sequence MRILYNICPY…GGPPRVRITG (66 aa). A VHIID motif is present at residues 309–313; sequence IHIID. Residues 359 to 391 are leucine repeat II (LRII); it reads IVGKMLKSMSEEFKIPLEFTPLSVYATQVTKEM. Positions 400–494 are PFYRE; it reads LSVNFTLQLH…QHCLAKDIVN (95 aa). The interval 497-571 is SAW; the sequence is ACEGKDRVER…RKLISASAWH (75 aa).

Belongs to the GRAS family.

It localises to the nucleus. May play a regulatory role in the early step of oligosaccharide elicitor response, downstream of the membrane-associated high-affinity chitin-binding protein. The sequence is that of Chitin-inducible gibberellin-responsive protein 1 (CIGR1) from Oryza sativa subsp. japonica (Rice).